Consider the following 510-residue polypeptide: Probable gamma-aminobutyrate transaminase 3, mitochondrial (510 aa).

Residues 1-41 (MICRSLLLLRSNAASKASSIVKHVAATGCLPEYSSEAPARY) constitute a mitochondrion transit peptide. 166-167 (GS) contributes to the pyridoxal 5'-phosphate binding site. Tyrosine 199 provides a ligand contact to substrate. Aspartate 306 serves as a coordination point for pyridoxal 5'-phosphate. Lysine 335 provides a ligand contact to substrate. An N6-(pyridoxal phosphate)lysine modification is found at lysine 335.

Belongs to the class-III pyridoxal-phosphate-dependent aminotransferase family.

Its subcellular location is the mitochondrion. The catalysed reaction is 4-aminobutanoate + pyruvate = succinate semialdehyde + L-alanine. It carries out the reaction 4-aminobutanoate + glyoxylate = succinate semialdehyde + glycine. Transaminase that degrades gamma-amino butyric acid (GABA). The polypeptide is Probable gamma-aminobutyrate transaminase 3, mitochondrial (Oryza sativa subsp. indica (Rice)).